Reading from the N-terminus, the 505-residue chain is Glycerol kinase 3 (505 aa).

Thr12 provides a ligand contact to ADP. Positions 12, 13, and 14 each coordinate ATP. Thr12 is a sn-glycerol 3-phosphate binding site. ADP is bound at residue Arg16. 4 residues coordinate sn-glycerol 3-phosphate: Arg82, Glu83, Tyr134, and Asp249. The glycerol site is built by Arg82, Glu83, Tyr134, Asp249, and Gln250. The ADP site is built by Thr271 and Gly315. ATP is bound by residues Thr271, Gly315, Gln319, and Gly416. Positions 416 and 420 each coordinate ADP.

This sequence belongs to the FGGY kinase family.

It catalyses the reaction glycerol + ATP = sn-glycerol 3-phosphate + ADP + H(+). It participates in polyol metabolism; glycerol degradation via glycerol kinase pathway; sn-glycerol 3-phosphate from glycerol: step 1/1. With respect to regulation, inhibited by fructose 1,6-bisphosphate (FBP). Key enzyme in the regulation of glycerol uptake and metabolism. Catalyzes the phosphorylation of glycerol to yield sn-glycerol 3-phosphate. This is Glycerol kinase 3 from Streptomyces avermitilis (strain ATCC 31267 / DSM 46492 / JCM 5070 / NBRC 14893 / NCIMB 12804 / NRRL 8165 / MA-4680).